The chain runs to 101 residues: ATP-dependent Clp protease adapter protein ClpS (101 aa).

This sequence belongs to the ClpS family. Binds to the N-terminal domain of the chaperone ClpA.

Functionally, involved in the modulation of the specificity of the ClpAP-mediated ATP-dependent protein degradation. This is ATP-dependent Clp protease adapter protein ClpS from Corynebacterium efficiens (strain DSM 44549 / YS-314 / AJ 12310 / JCM 11189 / NBRC 100395).